The chain runs to 593 residues: NADH-quinone oxidoreductase subunit C/D (593 aa).

Residues 1–184 (MTADSALYIP…DPYSLSAAKQ (184 aa)) form an NADH dehydrogenase I subunit C region. Residues 208 to 593 (DYMFLNLGPN…IDFVMADVDR (386 aa)) are NADH dehydrogenase I subunit D.

It in the N-terminal section; belongs to the complex I 30 kDa subunit family. In the C-terminal section; belongs to the complex I 49 kDa subunit family. As to quaternary structure, NDH-1 is composed of 13 different subunits. Subunits NuoB, CD, E, F, and G constitute the peripheral sector of the complex.

Its subcellular location is the cell inner membrane. It carries out the reaction a quinone + NADH + 5 H(+)(in) = a quinol + NAD(+) + 4 H(+)(out). In terms of biological role, NDH-1 shuttles electrons from NADH, via FMN and iron-sulfur (Fe-S) centers, to quinones in the respiratory chain. The immediate electron acceptor for the enzyme in this species is believed to be ubiquinone. Couples the redox reaction to proton translocation (for every two electrons transferred, four hydrogen ions are translocated across the cytoplasmic membrane), and thus conserves the redox energy in a proton gradient. This is NADH-quinone oxidoreductase subunit C/D from Pseudomonas aeruginosa (strain UCBPP-PA14).